A 313-amino-acid polypeptide reads, in one-letter code: uncharacterized protein (313 aa).

3 consecutive transmembrane segments (helical) span residues 19-41 (GLAV…AGFL), 51-68 (AIIG…IFFL), and 81-103 (IAEF…DFAI).

It is found in the cell membrane. This is an uncharacterized protein from Aquifex aeolicus (strain VF5).